The chain runs to 335 residues: Tetraacyldisaccharide 4'-kinase (335 aa).

Position 59-66 (59-66) interacts with ATP; it reads TAGGNGKT.

This sequence belongs to the LpxK family.

It catalyses the reaction a lipid A disaccharide + ATP = a lipid IVA + ADP + H(+). It functions in the pathway glycolipid biosynthesis; lipid IV(A) biosynthesis; lipid IV(A) from (3R)-3-hydroxytetradecanoyl-[acyl-carrier-protein] and UDP-N-acetyl-alpha-D-glucosamine: step 6/6. In terms of biological role, transfers the gamma-phosphate of ATP to the 4'-position of a tetraacyldisaccharide 1-phosphate intermediate (termed DS-1-P) to form tetraacyldisaccharide 1,4'-bis-phosphate (lipid IVA). The protein is Tetraacyldisaccharide 4'-kinase of Aliivibrio salmonicida (strain LFI1238) (Vibrio salmonicida (strain LFI1238)).